The primary structure comprises 227 residues: Cytochrome c oxidase subunit 2 (227 aa).

The Mitochondrial intermembrane portion of the chain corresponds to 1-14 (MPYPLQLGFQDATS). The chain crosses the membrane as a helical span at residues 15-45 (PIMEELLHFHDHTLMIVFLISSLVLYIITLM). The Mitochondrial matrix segment spans residues 46 to 59 (LTTKLTHTSTMDAQ). The chain crosses the membrane as a helical span at residues 60–87 (EVETVWTILPAVILILIALPSLRILYMM). Over 88–227 (DEINNPLLTI…HFEDWSTSML (140 aa)) the chain is Mitochondrial intermembrane. Histidine 161, cysteine 196, glutamate 198, cysteine 200, histidine 204, and methionine 207 together coordinate Cu cation. Glutamate 198 serves as a coordination point for Mg(2+).

Belongs to the cytochrome c oxidase subunit 2 family. As to quaternary structure, component of the cytochrome c oxidase (complex IV, CIV), a multisubunit enzyme composed of 14 subunits. The complex is composed of a catalytic core of 3 subunits MT-CO1, MT-CO2 and MT-CO3, encoded in the mitochondrial DNA, and 11 supernumerary subunits COX4I, COX5A, COX5B, COX6A, COX6B, COX6C, COX7A, COX7B, COX7C, COX8 and NDUFA4, which are encoded in the nuclear genome. The complex exists as a monomer or a dimer and forms supercomplexes (SCs) in the inner mitochondrial membrane with NADH-ubiquinone oxidoreductase (complex I, CI) and ubiquinol-cytochrome c oxidoreductase (cytochrome b-c1 complex, complex III, CIII), resulting in different assemblies (supercomplex SCI(1)III(2)IV(1) and megacomplex MCI(2)III(2)IV(2)). Found in a complex with TMEM177, COA6, COX18, COX20, SCO1 and SCO2. Interacts with TMEM177 in a COX20-dependent manner. Interacts with COX20. Interacts with COX16. Requires Cu cation as cofactor.

It is found in the mitochondrion inner membrane. The catalysed reaction is 4 Fe(II)-[cytochrome c] + O2 + 8 H(+)(in) = 4 Fe(III)-[cytochrome c] + 2 H2O + 4 H(+)(out). Component of the cytochrome c oxidase, the last enzyme in the mitochondrial electron transport chain which drives oxidative phosphorylation. The respiratory chain contains 3 multisubunit complexes succinate dehydrogenase (complex II, CII), ubiquinol-cytochrome c oxidoreductase (cytochrome b-c1 complex, complex III, CIII) and cytochrome c oxidase (complex IV, CIV), that cooperate to transfer electrons derived from NADH and succinate to molecular oxygen, creating an electrochemical gradient over the inner membrane that drives transmembrane transport and the ATP synthase. Cytochrome c oxidase is the component of the respiratory chain that catalyzes the reduction of oxygen to water. Electrons originating from reduced cytochrome c in the intermembrane space (IMS) are transferred via the dinuclear copper A center (CU(A)) of subunit 2 and heme A of subunit 1 to the active site in subunit 1, a binuclear center (BNC) formed by heme A3 and copper B (CU(B)). The BNC reduces molecular oxygen to 2 water molecules using 4 electrons from cytochrome c in the IMS and 4 protons from the mitochondrial matrix. The sequence is that of Cytochrome c oxidase subunit 2 (MT-CO2) from Dasypus novemcinctus (Nine-banded armadillo).